A 480-amino-acid polypeptide reads, in one-letter code: Glutamate--tRNA ligase (480 aa).

Residues 21-31 (PSPTGYLHVGG) carry the 'HIGH' region motif. A compositionally biased stretch (basic and acidic residues) spans 122–146 (NTQEQNKQKPRYDRHCLGDHKHSPE). The tract at residues 122–149 (NTQEQNKQKPRYDRHCLGDHKHSPEQPH) is disordered. The 'KMSKS' region signature appears at 248 to 252 (KLSKR). Lysine 251 serves as a coordination point for ATP.

This sequence belongs to the class-I aminoacyl-tRNA synthetase family. Glutamate--tRNA ligase type 1 subfamily. In terms of assembly, monomer.

The protein resides in the cytoplasm. The catalysed reaction is tRNA(Glu) + L-glutamate + ATP = L-glutamyl-tRNA(Glu) + AMP + diphosphate. Functionally, catalyzes the attachment of glutamate to tRNA(Glu) in a two-step reaction: glutamate is first activated by ATP to form Glu-AMP and then transferred to the acceptor end of tRNA(Glu). This Pasteurella multocida (strain Pm70) protein is Glutamate--tRNA ligase.